The primary structure comprises 708 residues: MKDMPLRIHVLLGLAITTLVQAVDKKVDCPRLCTCEIRPWFTPRSIYMEASTVDCNDLGLLTFPARLPANTQILLLQTNNIAKIEYSTDFPVNLTGLDLSQNNLSSVTNINVKKMPQLLSVYLEENKLTELPEKCLSELSNLQELYINHNLLSTISPGAFIGLHNLLRLHLNSNRLQMINSKWFDALPNLEILMIGENPIIRIKDMNFKPLINLRSLVIAGINLTEIPDNALVGLENLESISFYDNRLIKVPHVALQKVVNLKFLDLNKNPINRIRRGDFSNMLHLKELGINNMPELISIDSLAVDNLPDLRKIEATNNPRLSYIHPNAFFRLPKLESLMLNSNALSALYHGTIESLPNLKEISIHSNPIRCDCVIRWMNMNKTNIRFMEPDSLFCVDPPEFQGQNVRQVHFRDMMEICLPLIAPESFPSNLNVEAGSYVSFHCRATAEPQPEIYWITPSGQKLLPNTLTDKFYVHSEGTLDINGVTPKEGGLYTCIATNLVGADLKSVMIKVDGSFPQDNNGSLNIKIRDIQANSVLVSWKASSKILKSSVKWTAFVKTENSHAAQSARIPSDVKVYNLTHLNPSTEYKICIDIPTIYQKNRKKCVNVTTKGLHPDQKEYEKNNTTTLMACLGGLLGIIGVICLISCLSPEMNCDGGHSYVRNYLQKPTFALGELYPPLINLWEAGKEKSTSLKVKATVIGLPTNMS.

Residues methionine 1–alanine 22 form the signal peptide. One can recognise an LRRNT domain in the interval valine 23–alanine 69. At valine 23 to threonine 628 the chain is on the extracellular side. 12 LRR repeats span residues asparagine 70–proline 91, asparagine 93–lysine 114, glutamine 117–glutamate 138, asparagine 141–glycine 162, asparagine 165–alanine 186, asparagine 189–proline 210, asparagine 213–glycine 234, asparagine 237–lysine 258, asparagine 261–asparagine 282, histidine 285–alanine 304, aspartate 310–arginine 332, and lysine 335–proline 358. 2 N-linked (GlcNAc...) asparagine glycosylation sites follow: asparagine 93 and asparagine 103. Asparagine 223 carries an N-linked (GlcNAc...) asparagine glycan. The LRRCT domain maps to asparagine 368–proline 421. N-linked (GlcNAc...) asparagine glycosylation is present at asparagine 382. The Ig-like C2-type domain occupies proline 421 to aspartate 514. The cysteines at positions 444 and 496 are disulfide-linked. Asparagine 522, asparagine 579, asparagine 608, asparagine 624, and asparagine 625 each carry an N-linked (GlcNAc...) asparagine glycan. The Fibronectin type-III domain occupies glycine 523–aspartate 617. Residues leucine 629–leucine 649 traverse the membrane as a helical segment. Residues serine 650–serine 708 are Cytoplasmic-facing.

Its subcellular location is the membrane. The sequence is that of Leucine-rich repeat neuronal protein 3 (LRRN3) from Homo sapiens (Human).